The primary structure comprises 595 residues: Aspartate--tRNA(Asp/Asn) ligase (595 aa).

L-aspartate is bound at residue Glu-171. The interval 195–198 (QLFK) is aspartate. Arg-217 contacts L-aspartate. ATP-binding positions include 217–219 (RDE) and Gln-226. His-454 contacts L-aspartate. Position 488 (Glu-488) interacts with ATP. Position 495 (Arg-495) interacts with L-aspartate. Position 540 to 543 (540 to 543 (GLDR)) interacts with ATP.

It belongs to the class-II aminoacyl-tRNA synthetase family. Type 1 subfamily. In terms of assembly, homodimer.

The protein resides in the cytoplasm. It carries out the reaction tRNA(Asx) + L-aspartate + ATP = L-aspartyl-tRNA(Asx) + AMP + diphosphate. Its function is as follows. Aspartyl-tRNA synthetase with relaxed tRNA specificity since it is able to aspartylate not only its cognate tRNA(Asp) but also tRNA(Asn). Reaction proceeds in two steps: L-aspartate is first activated by ATP to form Asp-AMP and then transferred to the acceptor end of tRNA(Asp/Asn). In Bordetella petrii (strain ATCC BAA-461 / DSM 12804 / CCUG 43448), this protein is Aspartate--tRNA(Asp/Asn) ligase.